A 270-amino-acid chain; its full sequence is Regulatory protein RecX (270 aa).

The protein belongs to the RecX family.

It localises to the cytoplasm. Modulates RecA activity. The polypeptide is Regulatory protein RecX (Bacillus anthracis (strain A0248)).